Reading from the N-terminus, the 379-residue chain is Queuine tRNA-ribosyltransferase (379 aa).

Asp94 functions as the Proton acceptor in the catalytic mechanism. Substrate-binding positions include 94-98 (DSGGF), Asp148, Gln191, and Gly218. An RNA binding region spans residues 249-255 (GVGSPDS). Asp268 functions as the Nucleophile in the catalytic mechanism. The interval 273 to 277 (TRIAR) is RNA binding; important for wobble base 34 recognition. Zn(2+) contacts are provided by Cys306, Cys308, Cys311, and His337.

The protein belongs to the queuine tRNA-ribosyltransferase family. In terms of assembly, homodimer. Within each dimer, one monomer is responsible for RNA recognition and catalysis, while the other monomer binds to the replacement base PreQ1. It depends on Zn(2+) as a cofactor.

It catalyses the reaction 7-aminomethyl-7-carbaguanine + guanosine(34) in tRNA = 7-aminomethyl-7-carbaguanosine(34) in tRNA + guanine. It participates in tRNA modification; tRNA-queuosine biosynthesis. In terms of biological role, catalyzes the base-exchange of a guanine (G) residue with the queuine precursor 7-aminomethyl-7-deazaguanine (PreQ1) at position 34 (anticodon wobble position) in tRNAs with GU(N) anticodons (tRNA-Asp, -Asn, -His and -Tyr). Catalysis occurs through a double-displacement mechanism. The nucleophile active site attacks the C1' of nucleotide 34 to detach the guanine base from the RNA, forming a covalent enzyme-RNA intermediate. The proton acceptor active site deprotonates the incoming PreQ1, allowing a nucleophilic attack on the C1' of the ribose to form the product. After dissociation, two additional enzymatic reactions on the tRNA convert PreQ1 to queuine (Q), resulting in the hypermodified nucleoside queuosine (7-(((4,5-cis-dihydroxy-2-cyclopenten-1-yl)amino)methyl)-7-deazaguanosine). The polypeptide is Queuine tRNA-ribosyltransferase (Listeria monocytogenes serovar 1/2a (strain ATCC BAA-679 / EGD-e)).